We begin with the raw amino-acid sequence, 296 residues long: Bidirectional sugar transporter SWEET13 (296 aa).

Residues 1-9 (MAGLSLQHP) are Extracellular-facing. A helical transmembrane segment spans residues 10 to 30 (WAFAFGLLGNLISFTTYLAPI). In terms of domain architecture, MtN3/slv 1 spans 13-98 (AFGLLGNLIS…VMYLAYAPKK (86 aa)). The Cytoplasmic segment spans residues 31-45 (PTFYRIYKSKSTEGF). The helical transmembrane segment at 46–66 (QSVPYVVALFSAMLWIFYALI) threads the bilayer. Topologically, residues 67–71 (KSNEA) are extracellular. A helical membrane pass occupies residues 72 to 92 (LLITINAAGCVIETIYIVMYL). At 93–105 (AYAPKKAKVFTTK) the chain is on the cytoplasmic side. A helical transmembrane segment spans residues 106–126 (ILLLLNVGVFGVILLLTLLLS). Over 127–133 (HGEQRVV) the chain is Extracellular. Residues 134-154 (SLGWVCVAFSVSVFVAPLSII) traverse the membrane as a helical segment. The MtN3/slv 2 domain occupies 134–217 (SLGWVCVAFS…MGLYVFYMNA (84 aa)). Over 155-167 (KRVIQSRSVEYMP) the chain is Cytoplasmic. A helical membrane pass occupies residues 168 to 188 (FSLSLTLTLSAVVWFLYGLLI). Residues 189–192 (KDKY) are Extracellular-facing. The helical transmembrane segment at 193-213 (VALPNILGFTFGVVQMGLYVF) threads the bilayer. The Cytoplasmic portion of the chain corresponds to 214-296 (YMNATPVAGE…PPRAVEVAAV (83 aa)).

This sequence belongs to the SWEET sugar transporter family. Forms homooligomers and/or heterooligomers.

Its subcellular location is the cell membrane. Functionally, mediates both low-affinity uptake and efflux of sugar across the plasma membrane. Its function is as follows. Confers blight susceptibility. Confers TAL effector-mediated susceptibility to Xanthomonas oryzae pv. oryzae. The protein is Bidirectional sugar transporter SWEET13 (SWEET13) of Oryza sativa subsp. japonica (Rice).